A 118-amino-acid chain; its full sequence is uncharacterized protein (118 aa).

A run of 3 helical transmembrane segments spans residues isoleucine 6–valine 26, alanine 43–leucine 63, and isoleucine 84–glutamine 104.

The protein belongs to the AzlD/HI_1737/HP1330 family.

It localises to the cell membrane. This is an uncharacterized protein from Helicobacter pylori (strain J99 / ATCC 700824) (Campylobacter pylori J99).